We begin with the raw amino-acid sequence, 104 residues long: Replication factor A protein 3 (104 aa).

It belongs to the replication factor A protein 3 family. Component of the heterotrimeric canonical replication protein A complex (RPA).

It localises to the nucleus. Its function is as follows. As part of the replication protein A (RPA/RP-A), a single-stranded DNA-binding heterotrimeric complex, may play an essential role in DNA replication, recombination and repair. Binds and stabilizes single-stranded DNA intermediates, preventing complementary DNA reannealing and recruiting different proteins involved in DNA metabolism. This is Replication factor A protein 3 (ssb3) from Schizosaccharomyces pombe (strain 972 / ATCC 24843) (Fission yeast).